The sequence spans 997 residues: Malignant fibrous histiocytoma-amplified sequence 1 homolog (997 aa).

14 LRR repeats span residues 32–53, 54–76, 79–100, 102–123, 125–146, 148–170, 171–192, 194–216, 218–239, 241–262, 264–286, 287–308, 310–331, and 333–354; these read SLRQ…ADLG, DVEV…QSLS, NLHV…VYHL, RLTE…VGLL, KLKK…LGML, DLEE…QGLP, SLRT…LFHV, ALEE…IRSM, SLKI…ICEL, NLES…FGAL, KLKM…LQLV, DLEE…ISCM, KLVT…IVEL, and FLEE…FGKL. One can recognise a Roc domain in the interval 393–626; that stretch reads QPAVKPRLKL…EKLLSVAEHR (234 aa). Positions 637–861 constitute a COR domain; it reads PKSWQMLEEL…RFSVQINSHI (225 aa).

The protein resides in the cytoplasm. In terms of biological role, probable GTP-binding protein. Functions in innate immunity and more specifically the inflammatory response as a regulator of the Toll-like receptor TLR2 and TLR4 signaling pathways. In Xenopus tropicalis (Western clawed frog), this protein is Malignant fibrous histiocytoma-amplified sequence 1 homolog (mfhas1).